A 191-amino-acid chain; its full sequence is MIGAVLAGGRGKRFGGDKLLYRINGKPLILYTIERLETAKKIDEIILVASKDNAEKLEKLGYRVVVDNLLIGPMGGVYTALSLGDAFVVAGDMPLLVPEFVDFIISEFKKSGKTACVPRWENGYLEPLHAAYSSAFREVLEEKIKAGNYALNRAIREVNPCYLPIESLPEEWRESFFNVNTREDLGKLHKG.

GTP-binding positions include 6–8, lysine 18, aspartate 67, and aspartate 92; that span reads LAG. Aspartate 92 lines the Mg(2+) pocket.

It belongs to the MobA family. Mg(2+) serves as cofactor.

Its subcellular location is the cytoplasm. It carries out the reaction Mo-molybdopterin + GTP + H(+) = Mo-molybdopterin guanine dinucleotide + diphosphate. Transfers a GMP moiety from GTP to Mo-molybdopterin (Mo-MPT) cofactor (Moco or molybdenum cofactor) to form Mo-molybdopterin guanine dinucleotide (Mo-MGD) cofactor. The polypeptide is Probable molybdenum cofactor guanylyltransferase (Thermococcus gammatolerans (strain DSM 15229 / JCM 11827 / EJ3)).